Reading from the N-terminus, the 125-residue chain is uncharacterized protein (125 aa).

This sequence belongs to the anhydro-N-acetylmuramic acid kinase family.

This is an uncharacterized protein from Yersinia enterocolitica.